Consider the following 164-residue polypeptide: Dihydrofolate reductase (164 aa).

The DHFR domain occupies 2–162 (NISIIVAMSQ…FYVTFKILKK (161 aa)). 6–8 (IVA) provides a ligand contact to substrate. NADP(+) is bound by residues 7 to 8 (VA) and 15 to 20 (IGQKNS). Aspartate 28 is a binding site for substrate. 44-47 (GRKT) serves as a coordination point for NADP(+). Residue arginine 58 coordinates substrate. NADP(+) is bound by residues 63-66 (LTRQ) and 96-101 (IGGSNL). A substrate-binding site is contributed by threonine 115.

Belongs to the dihydrofolate reductase family.

The catalysed reaction is (6S)-5,6,7,8-tetrahydrofolate + NADP(+) = 7,8-dihydrofolate + NADPH + H(+). Its pathway is cofactor biosynthesis; tetrahydrofolate biosynthesis; 5,6,7,8-tetrahydrofolate from 7,8-dihydrofolate: step 1/1. In terms of biological role, key enzyme in folate metabolism. Catalyzes an essential reaction for de novo glycine and purine synthesis, and for DNA precursor synthesis. The protein is Dihydrofolate reductase (folA) of Buchnera aphidicola subsp. Baizongia pistaciae (strain Bp).